The sequence spans 295 residues: GTPase Era (295 aa).

In terms of domain architecture, Era-type G spans 3-171 (KSGFITVIGR…LELMKKYLPE (169 aa)). The segment at 11 to 18 (GRPNVGKS) is G1. A GTP-binding site is contributed by 11-18 (GRPNVGKS). A G2 region spans residues 37–41 (QTTRN). The segment at 58–61 (DTPG) is G3. Residues 58-62 (DTPGM) and 120-123 (NKID) each bind GTP. Residues 120-123 (NKID) are G4. Positions 150 to 152 (ISA) are G5. The KH type-2 domain maps to 202 to 279 (LSEEVPHGIA…SLKVWVKVKK (78 aa)).

This sequence belongs to the TRAFAC class TrmE-Era-EngA-EngB-Septin-like GTPase superfamily. Era GTPase family. Monomer.

The protein resides in the cytoplasm. The protein localises to the cell membrane. In terms of biological role, an essential GTPase that binds both GDP and GTP, with rapid nucleotide exchange. Plays a role in 16S rRNA processing and 30S ribosomal subunit biogenesis and possibly also in cell cycle regulation and energy metabolism. This chain is GTPase Era, found in Clostridium tetani (strain Massachusetts / E88).